Consider the following 284-residue polypeptide: P2R1A-PPP2R2A-interacting phosphatase regulator 1 (284 aa).

A disordered region spans residues 1–65 (MAQEKMELDL…RRNSTTFPSR (65 aa)). Gly residues predominate over residues 20–29 (EGGGPGGGGL). Position 32 is a phosphoserine (S32). A Phosphoserine; by CHEK1 modification is found at S34. Phosphoserine is present on residues S42, S45, S59, and S73. K86 participates in a covalent cross-link: Glycyl lysine isopeptide (Lys-Gly) (interchain with G-Cter in SUMO1). Residues S140 and S144 each carry the phosphoserine modification. T146 carries the post-translational modification Phosphothreonine. A disordered region spans residues 164-185 (SNGLPPSPIPSPTTRFTTRRSQ). A compositionally biased stretch (low complexity) spans 175 to 185 (PTTRFTTRRSQ). A phosphoserine mark is found at S184 and S186. The tract at residues 233-284 (GVCVSSDTLDGNSSSAGSSCNSPAKVSTTTDSPVSPAQAASPFIPVDELSSK) is disordered. Positions 243–254 (GNSSSAGSSCNS) are enriched in low complexity. A compositionally biased stretch (polar residues) spans 256–267 (AKVSTTTDSPVS). Phosphoserine is present on residues S264, S267, and S273.

This sequence belongs to the FAM122 family. Interacts with PPP2CA and PPP2R1A. Interacts (via its N-terminus) with PPP2R2A; the interaction is direct and this interaction inhibits PP2A activity. The CHEK1-mediated Ser-34 phosphorylated form interacts with 14-3-3 proteins. CHEK1-mediated phosphorylation at Ser-34 negatively regulates its ability to inhibit serine/threonine-protein phosphatase 2A (PP2A) activity. Phosphorylation leads to its release from the PP2A complex and its sequestration by 14-3-3 proteins in the cytoplasm resulting in its inability to translocate to the nucleus, where it otherwise inhibits PP2A.

The protein resides in the nucleus. The protein localises to the cytoplasm. Acts as an inhibitor of serine/threonine-protein phosphatase 2A (PP2A) activity. Inhibits PP2A activity by blocking the substrate binding site on PPP2R2A and the active site of PPP2CA. Potentiates ubiquitin-mediated proteasomal degradation of serine/threonine-protein phosphatase 2A catalytic subunit alpha (PPP2CA). Inhibits PP2A-mediated dephosphorylation of WEE1, promoting ubiquitin-mediated proteolysis of WEE1, thereby releasing G2/M checkpoint. The sequence is that of P2R1A-PPP2R2A-interacting phosphatase regulator 1 from Mus musculus (Mouse).